Here is a 299-residue protein sequence, read N- to C-terminus: Protoheme IX farnesyltransferase 1 (299 aa).

Helical transmembrane passes span 25-45 (VVVL…RAGV), 47-67 (WTVL…AAAV), 95-115 (TGAL…LLTF), 119-139 (LTAW…TGFL), 147-167 (IVIG…AATG), 173-193 (PLLL…ALAI), 226-246 (ALLA…LYLI), and 279-299 (IWYL…LLNL).

Belongs to the UbiA prenyltransferase family. Protoheme IX farnesyltransferase subfamily.

It localises to the cell inner membrane. It catalyses the reaction heme b + (2E,6E)-farnesyl diphosphate + H2O = Fe(II)-heme o + diphosphate. It functions in the pathway porphyrin-containing compound metabolism; heme O biosynthesis; heme O from protoheme: step 1/1. Converts heme B (protoheme IX) to heme O by substitution of the vinyl group on carbon 2 of heme B porphyrin ring with a hydroxyethyl farnesyl side group. This is Protoheme IX farnesyltransferase 1 from Pseudomonas fluorescens (strain Pf0-1).